The chain runs to 129 residues: Bacteriohemerythrin (129 aa).

Fe cation is bound by residues His-19, His-59, Glu-63, His-78, His-82, His-119, and Asp-124.

It belongs to the hemerythrin family. As to quaternary structure, monomer.

Its function is as follows. Oxygen-binding protein. May be involved in a storage mechanism or for delivery to oxygen-requiring enzymes. The oxygen-binding site contains two iron atoms. This is Bacteriohemerythrin from Clostridium acetobutylicum (strain ATCC 824 / DSM 792 / JCM 1419 / IAM 19013 / LMG 5710 / NBRC 13948 / NRRL B-527 / VKM B-1787 / 2291 / W).